A 478-amino-acid polypeptide reads, in one-letter code: Glutamate--tRNA ligase 1 (478 aa).

A 'HIGH' region motif is present at residues proline 10–glycine 20. Positions lysine 242–arginine 246 match the 'KMSKS' region motif. Residue lysine 245 participates in ATP binding.

The protein belongs to the class-I aminoacyl-tRNA synthetase family. Glutamate--tRNA ligase type 1 subfamily. As to quaternary structure, monomer.

It is found in the cytoplasm. The catalysed reaction is tRNA(Glu) + L-glutamate + ATP = L-glutamyl-tRNA(Glu) + AMP + diphosphate. In terms of biological role, catalyzes the attachment of glutamate to tRNA(Glu) in a two-step reaction: glutamate is first activated by ATP to form Glu-AMP and then transferred to the acceptor end of tRNA(Glu). In Orientia tsutsugamushi (strain Boryong) (Rickettsia tsutsugamushi), this protein is Glutamate--tRNA ligase 1.